Consider the following 120-residue polypeptide: MGCCGCGGCGGCGGRCGGCGGGCGGGCGGGCGGGCGGGCGGGCGGGCGGGCGGSCGSCTTCRCYRVGCCSSCCPCCRGCCGGCCSTPVICCCRRTCHSCGCGCGKGCCQQKCCCQKQCCC.

The segment at 4–104 is 19 X 2 AA repeats of CG; the sequence is CGCGGCGGCG…TCHSCGCGCG (101 aa).

This sequence belongs to the KRTAP type 28 family.

In the hair cortex, hair keratin intermediate filaments are embedded in an interfilamentous matrix, consisting of hair keratin-associated proteins (KRTAP), which are essential for the formation of a rigid and resistant hair shaft through their extensive disulfide bond cross-linking with abundant cysteine residues of hair keratins. The matrix proteins include the high-sulfur and high-glycine-tyrosine keratins. This is Small cysteine and glycine repeat-containing protein 2 from Homo sapiens (Human).